The sequence spans 337 residues: Histidine N-acetyltransferase (337 aa).

A propeptide spans 1-2 (MK) (removed in mature form). Positions 21 to 157 (LQFSVATEED…GILLMRFRAE (137 aa)) constitute an N-acetyltransferase domain.

Expressed exclusively in the brain and lens.

It carries out the reaction L-histidine + acetyl-CoA = N(alpha)-acetyl-L-histidine + CoA + H(+). In terms of biological role, enzyme responsible for the N-acetyl-histidine (NAH) synthesis, which is a major constituent of brain and lens of ectothermic vertebrates. In Oreochromis niloticus (Nile tilapia), this protein is Histidine N-acetyltransferase (hisat).